The chain runs to 236 residues: uncharacterized protein (236 aa).

The next 7 membrane-spanning stretches (helical) occupy residues 32–52, 61–81, 90–110, 115–135, 144–164, 167–187, and 208–228; these read MALALLLTGVAAITTISVEPI, FGTIIMFAPLGIALYFFMGFG, ILFWVYAGLTGMSLSYLALIY, IARTFFICSSVFGAMSLYGYS, GSFFAMGLIGLIIASLVNLFL, SSLSFATSLIGIVVFMGLIAW, and LSIMAAFTLYLDFINLFLYLM.

Belongs to the BI1 family.

Its subcellular location is the cell membrane. This is an uncharacterized protein from Rickettsia prowazekii (strain Madrid E).